The chain runs to 343 residues: L-threonine 3-dehydrogenase (343 aa).

C40 lines the Zn(2+) pocket. Active-site charge relay system residues include T42 and H45. Positions 65, 66, 95, 98, 101, and 109 each coordinate Zn(2+). Residues I177, D197, R202, 264-266 (LGI), and 288-289 (IY) each bind NAD(+).

It belongs to the zinc-containing alcohol dehydrogenase family. Homotetramer. It depends on Zn(2+) as a cofactor.

It localises to the cytoplasm. It carries out the reaction L-threonine + NAD(+) = (2S)-2-amino-3-oxobutanoate + NADH + H(+). The protein operates within amino-acid degradation; L-threonine degradation via oxydo-reductase pathway; glycine from L-threonine: step 1/2. Its function is as follows. Catalyzes the NAD(+)-dependent oxidation of L-threonine to 2-amino-3-ketobutyrate. In Vibrio vulnificus (strain YJ016), this protein is L-threonine 3-dehydrogenase.